A 150-amino-acid chain; its full sequence is UPF0735 ACT domain-containing protein Csac_0995 (150 aa).

In terms of domain architecture, ACT spans 72-147 (TLALVLQDVP…GVKKIEILGR (76 aa)).

It belongs to the UPF0735 family.

This chain is UPF0735 ACT domain-containing protein Csac_0995, found in Caldicellulosiruptor saccharolyticus (strain ATCC 43494 / DSM 8903 / Tp8T 6331).